A 59-amino-acid polypeptide reads, in one-letter code: Large ribosomal subunit protein uL30 (59 aa).

It belongs to the universal ribosomal protein uL30 family. In terms of assembly, part of the 50S ribosomal subunit.

The polypeptide is Large ribosomal subunit protein uL30 (Geobacter metallireducens (strain ATCC 53774 / DSM 7210 / GS-15)).